We begin with the raw amino-acid sequence, 596 residues long: Aspartate--tRNA(Asp/Asn) ligase (596 aa).

L-aspartate is bound at residue glutamate 175. Positions 199 to 202 (QMFK) are aspartate. Arginine 221 and histidine 451 together coordinate L-aspartate. Residue 221–223 (RDE) participates in ATP binding. ATP is bound at residue glutamate 485. Arginine 492 contacts L-aspartate. Position 537 to 540 (537 to 540 (GVDR)) interacts with ATP.

Belongs to the class-II aminoacyl-tRNA synthetase family. Type 1 subfamily. As to quaternary structure, homodimer.

Its subcellular location is the cytoplasm. It catalyses the reaction tRNA(Asx) + L-aspartate + ATP = L-aspartyl-tRNA(Asx) + AMP + diphosphate. In terms of biological role, aspartyl-tRNA synthetase with relaxed tRNA specificity since it is able to aspartylate not only its cognate tRNA(Asp) but also tRNA(Asn). Reaction proceeds in two steps: L-aspartate is first activated by ATP to form Asp-AMP and then transferred to the acceptor end of tRNA(Asp/Asn). This is Aspartate--tRNA(Asp/Asn) ligase from Zymomonas mobilis subsp. mobilis (strain ATCC 31821 / ZM4 / CP4).